A 647-amino-acid chain; its full sequence is ATP-binding protein Uup (647 aa).

ABC transporter domains follow at residues 1–253 and 320–546; these read MALI…RVEA and FEME…AKAK. ATP contacts are provided by residues 36–43 and 352–359; these read GRNGAGKS and GPNGCGKT. Positions 545–563 are enriched in basic and acidic residues; sequence AKKSEPLKEESAVKNDRTS. Residues 545 to 569 are disordered; the sequence is AKKSEPLKEESAVKNDRTSKPKSVK. The interval 559-647 is C-terminal domain (CTD), binds DNA; it reads NDRTSKPKSV…EKKNLVEGKA (89 aa).

This sequence belongs to the ABC transporter superfamily. ABCF family. Uup subfamily.

It localises to the cytoplasm. The enzyme catalyses ATP + H2O = ADP + phosphate + H(+). Its function is as follows. Probably plays a role in ribosome assembly or function. May be involved in resolution of branched DNA intermediates that result from template switching in postreplication gaps. Binds DNA and has ATPase activity. The polypeptide is ATP-binding protein Uup (Haemophilus influenzae (strain ATCC 51907 / DSM 11121 / KW20 / Rd)).